Consider the following 208-residue polypeptide: Hemocyanin, units E and F (208 aa).

Residue histidine 1 coordinates Cu cation. The interval 1–74 (HGLPAQCPNA…HDLESVRGNL (74 aa)) is unit E. A disulfide bridge links cysteine 7 with cysteine 18. A cross-link (2'-(S-cysteinyl)-histidine (Cys-His)) is located at residues 19 to 21 (CLH). A glycan (N-linked (GlcNAc...) asparagine) is linked at asparagine 43. Positions 75–208 (VRKNVDRLSL…GHLSLLSPET (134 aa)) are unit F. Histidine 113 contacts Cu cation. Cysteines 119 and 130 form a disulfide. Residues 131–133 (CLH) constitute a cross-link (2'-(S-cysteinyl)-histidine (Cys-His)). The Cu cation site is built by histidine 133 and histidine 142.

Belongs to the tyrosinase family. Hemocyanin subfamily. In terms of assembly, decamers of large identical subunits (390 kDa), each containing 8 globular oxygen-binding functional units. Cu(2+) serves as cofactor.

Hemocyanins are copper-containing oxygen carriers occurring freely dissolved in the hemolymph of many mollusks and arthropods. The chain is Hemocyanin, units E and F from Sepia officinalis (Common cuttlefish).